The primary structure comprises 517 residues: Cytochrome P450 monooxygenase polD (517 aa).

A helical transmembrane segment spans residues 5–27 (VVLVGIVVLVLAYLSSTGKVYPH). Residue Cys-435 participates in heme binding.

Belongs to the cytochrome P450 family. It depends on heme as a cofactor.

The protein resides in the membrane. Functionally, cytochrome P450 monooxygenase; part of the gene cluster that mediates the biosynthesis of antifungal fernane-type triterpenoid polytolypin. PolD doe not seem to be involved in the biosynthesis of polytolypin. Within the pathway, the triterpene cyclase polA first catalyzes the cyclization of 2,3-oxidosqualene to motiol, polc converts the 4-alpha-methyl group of motiol to a carboxyl group, polB is responsible for appending a hydroxyl group at the 2-alpha position and polE is a dual functional P450, which can catalyze the formation of both the 1-beta-hydroxyl group and 10-beta-carboxyl group. The sequence is that of Cytochrome P450 monooxygenase polD from Polytolypa hystricis (strain UAMH7299).